A 428-amino-acid polypeptide reads, in one-letter code: Glutamate-1-semialdehyde 2,1-aminomutase (428 aa).

Lys265 is subject to N6-(pyridoxal phosphate)lysine.

This sequence belongs to the class-III pyridoxal-phosphate-dependent aminotransferase family. HemL subfamily. In terms of assembly, homodimer. Requires pyridoxal 5'-phosphate as cofactor.

The protein resides in the cytoplasm. It catalyses the reaction (S)-4-amino-5-oxopentanoate = 5-aminolevulinate. It participates in porphyrin-containing compound metabolism; protoporphyrin-IX biosynthesis; 5-aminolevulinate from L-glutamyl-tRNA(Glu): step 2/2. The polypeptide is Glutamate-1-semialdehyde 2,1-aminomutase (Shewanella frigidimarina (strain NCIMB 400)).